Reading from the N-terminus, the 715-residue chain is Protein MTSS 2 (715 aa).

The IMD domain occupies 1–249; the sequence is METAEKECGA…EQVIKDLKGS (249 aa). The stretch at 134–156 forms a coiled coil; the sequence is HEIKKKSSDTLKLQKKARKGKGD. Composition is skewed to low complexity over residues 253 to 274, 284 to 295, and 312 to 330; these read WSYQ…SMCS, SSVSSHDSGFVS, and TSQK…TCQS. Disordered stretches follow at residues 253-405, 420-485, and 527-562; these read WSYQ…EVSP, LEHQ…RNSN, and IRRT…PTVP. A Phosphothreonine modification is found at threonine 257. Serine 261 carries the post-translational modification Phosphoserine. A compositionally biased stretch (polar residues) spans 331 to 341; the sequence is VSECSSPTSDW. Residues 360 to 369 are compositionally biased toward basic and acidic residues; the sequence is DRVEHLRDTE. Residue serine 404 is modified to Phosphoserine. Residues 429–442 show a composition bias toward low complexity; that stretch reads SLQYSSGYSTQTTT. Residues 443–455 are compositionally biased toward polar residues; sequence PSCSEDTIPSQGS. A phosphoserine mark is found at serine 542, serine 564, serine 575, serine 587, serine 597, and serine 602. Threonine 606 bears the Phosphothreonine mark. The tract at residues 661 to 690 is disordered; the sequence is FPFPTALSATPSEETPTPPPAATSDPPAED. The WH2 domain maps to 687 to 704; sequence PAEDMLVAIRRGVRLRRT.

The protein belongs to the MTSS family. As to quaternary structure, interacts (via IMD domain) with RAC1; this interaction may be important to potentiate PDGF-induced RAC1 activation.

The protein localises to the cytoplasm. It localises to the cell projection. It is found in the ruffle. In terms of biological role, involved in plasma membrane dynamics. Potentiated PDGF-mediated formation of membrane ruffles and lamellipodia in fibroblasts, acting via RAC1 activation. May function in actin bundling. This is Protein MTSS 2 (Mtss2) from Mus musculus (Mouse).